We begin with the raw amino-acid sequence, 68 residues long: Large ribosomal subunit protein uL29 (68 aa).

The protein belongs to the universal ribosomal protein uL29 family.

In Nitrobacter hamburgensis (strain DSM 10229 / NCIMB 13809 / X14), this protein is Large ribosomal subunit protein uL29.